We begin with the raw amino-acid sequence, 1495 residues long: Terminal uridylyltransferase 7 (1495 aa).

Disordered stretches follow at residues 1-30 (MGDT…GHPQ), 43-69 (HGSK…RKGP), 89-140 (WMND…EDGY), and 162-205 (LETT…PVID). The segment covering 15–26 (DRGTMDDDDFRR) has biased composition (basic and acidic residues). A phosphothreonine mark is found at Thr-57 and Thr-64. Basic and acidic residues-rich tracts occupy residues 92-118 (DSHK…EFKP) and 128-140 (QRKD…EDGY). A phosphoserine mark is found at Ser-132 and Ser-172. Over residues 178–187 (QRSRPRKPRK) the composition is skewed to basic residues. The Matrin-type zinc-finger motif lies at 244–274 (YTCRLCDVLIESIAFAHKHIKEKRHKKNIKE). Residues 551–600 (VGQLWVELLRFYALEFNLADLVISIRVKELVSRELKDWPKKRIAIEDPYS) form the PAP-associated 1 domain. Ser-600 carries the post-translational modification Phosphoserine. Basic and acidic residues predominate over residues 734-756 (DDYKGDKVYHPETGRKNEKEKVG). Disordered stretches follow at residues 734–757 (DDYK…KVGR) and 831–898 (THSV…EDDE). Positions 831–841 (THSVQGQTSEM) are enriched in polar residues. Composition is skewed to acidic residues over residues 843–859 (PSDE…EEEE), 868–880 (EDED…DELD), and 887–898 (GDEDALSEEDDE). Phosphoserine is present on Ser-844. Phosphoserine occurs at positions 893 and 939. The segment at 951-1495 (SKLIFTKGKS…ASAKRTQQES (545 aa)) is sufficient for monouridylation activity. The CCHC-type 1 zinc-finger motif lies at 963-980 (VVCSLCKREGHLKKDCPE). UTP contacts are provided by residues 1047–1050 (SSKN), 1057–1060 (SDLD), Asn-1130, Lys-1152, 1170–1174 (SYAYT), and His-1286. The Mg(2+) site is built by Asp-1058 and Asp-1060. One can recognise a PAP-associated 2 domain in the interval 1233–1286 (SVGQLWLGLLRFYTEEFDFKEHVISIRRKSLLTTFKKQWTSKYIVIEDPFDLNH). The CCHC-type 2 zinc finger occupies 1345-1362 (RCCRICGKIGHFMKDCPM). 2 disordered regions span residues 1367 to 1424 (RRRR…MRAA) and 1466 to 1495 (CPQF…QQES). Residues 1381–1410 (PENKEKRSKEDKEIHNKYTEREVSTKEDKP) are compositionally biased toward basic and acidic residues. The segment at 1451 to 1468 (KRCFICGREGHIKKECPQ) adopts a CCHC-type 3 zinc-finger fold. Polar residues predominate over residues 1470-1485 (KGSSGSLSSKYMTQGK).

The protein belongs to the DNA polymerase type-B-like family. In terms of assembly, interacts with MOV10; the interaction is RNA-dependent. Mg(2+) serves as cofactor. The cofactor is Mn(2+).

The protein resides in the cytoplasm. It catalyses the reaction RNA(n) + UTP = RNA(n)-3'-uridine ribonucleotide + diphosphate. Functionally, uridylyltransferase that mediates the terminal uridylation of mRNAs with short (less than 25 nucleotides) poly(A) tails, hence facilitating global mRNA decay. Essential for both oocyte maturation and fertility. Through 3' terminal uridylation of mRNA, sculpts, with TUT7, the maternal transcriptome by eliminating transcripts during oocyte growth. Involved in microRNA (miRNA)-induced gene silencing through uridylation of deadenylated miRNA targets. Also functions as an integral regulator of microRNA biogenesiS using 3 different uridylation mechanisms. Acts as a suppressor of miRNA biogenesis by mediating the terminal uridylation of some miRNA precursors, including that of let-7 (pre-let-7). Uridylated pre-let-7 RNA is not processed by Dicer and undergo degradation. Pre-let-7 uridylation is strongly enhanced in the presence of LIN28A. In the absence of LIN28A, TUT7 and TUT4 monouridylate group II pre-miRNAs, which includes most of pre-let7 members, that shapes an optimal 3' end overhang for efficient processing. Add oligo-U tails to truncated pre-miRNAS with a 5' overhang which may promote rapid degradation of non-functional pre-miRNA species. Does not play a role in replication-dependent histone mRNA degradation. Due to functional redundancy between TUT4 and TUT7, the identification of the specific role of each of these proteins is difficult. TUT4 and TUT7 restrict retrotransposition of long interspersed element-1 (LINE-1) in cooperation with MOV10 counteracting the RNA chaperonne activity of L1RE1. TUT7 uridylates LINE-1 mRNAs in the cytoplasm which inhibits initiation of reverse transcription once in the nucleus, whereas uridylation by TUT4 destabilizes mRNAs in cytoplasmic ribonucleoprotein granules. This is Terminal uridylyltransferase 7 from Homo sapiens (Human).